The following is a 354-amino-acid chain: Probable L-ascorbate-6-phosphate lactonase UlaG (354 aa).

The protein belongs to the UlaG family. Requires a divalent metal cation as cofactor.

The protein resides in the cytoplasm. The catalysed reaction is L-ascorbate 6-phosphate + H2O = 3-dehydro-L-gulonate 6-phosphate. The protein operates within cofactor degradation; L-ascorbate degradation; D-xylulose 5-phosphate from L-ascorbate: step 1/4. Its function is as follows. Probably catalyzes the hydrolysis of L-ascorbate-6-P into 3-keto-L-gulonate-6-P. Is essential for L-ascorbate utilization under anaerobic conditions. This Escherichia coli O139:H28 (strain E24377A / ETEC) protein is Probable L-ascorbate-6-phosphate lactonase UlaG.